The primary structure comprises 267 residues: Glutamate racemase (267 aa).

Residues 9-10 (DS) and 41-42 (YS) contribute to the substrate site. Cysteine 73 (proton donor/acceptor) is an active-site residue. Residue 74 to 75 (NT) coordinates substrate. Cysteine 184 serves as the catalytic Proton donor/acceptor. 185 to 186 (TH) contributes to the substrate binding site.

This sequence belongs to the aspartate/glutamate racemases family.

The enzyme catalyses L-glutamate = D-glutamate. The protein operates within cell wall biogenesis; peptidoglycan biosynthesis. Functionally, provides the (R)-glutamate required for cell wall biosynthesis. The polypeptide is Glutamate racemase (Actinobacillus pleuropneumoniae serotype 7 (strain AP76)).